We begin with the raw amino-acid sequence, 1538 residues long: CLIP-associating protein 1 (1538 aa).

HEAT repeat units follow at residues 87–124 (AQIG…QAAN) and 163–200 (LTLS…HVGE). The segment at 235 to 292 (SANDKNFDDEDSVDGNRPSSASSTSSKAPPSSRRNVGMGTTRRLGSSTLGSKSSAAKE) is disordered. Ser246 carries the post-translational modification Phosphoserine. Low complexity predominate over residues 251–268 (RPSSASSTSSKAPPSSRR). 2 HEAT repeats span residues 405–440 (HGAE…IRHT) and 441–477 (HIPR…EWQT). The interval 543–783 (SDSIVSLPQS…DRFGLGQPGR (241 aa)) is disordered. Phosphoserine occurs at positions 545, 548, 558, 559, and 568. Positions 548-567 (SLPQSDRSSSSSQESLNRPL) are enriched in low complexity. Residues 574–594 (TGSTTSRASTVSTKSVSTTGS) show a composition bias toward low complexity. At Ser600 the chain carries Phosphoserine. Positions 606 to 628 (AAASAKSKVSSSSGTTPFSSAAA) are enriched in low complexity. Ser636, Ser646, Ser647, and Ser649 each carry phosphoserine. Over residues 645 to 658 (QSSGSATNVASTPD) the composition is skewed to polar residues. A Phosphothreonine modification is found at Thr656. The tract at residues 662-785 (RSRAKVVSQS…FGLGQPGRIP (124 aa)) is interaction with microtubules, MAPRE1 and MAPRE3. Residues 673–692 (RSRSANPAGAGSRSSSPGKL) show a composition bias toward low complexity. Phosphoserine occurs at positions 684, 688, 695, and 705. Residues 693–705 (LGSGYGGLTGGSS) are compositionally biased toward gly residues. A Phosphothreonine modification is found at Thr711. Position 714 is a phosphoserine (Ser714). Polar residues predominate over residues 724–733 (QGCSRETSPN). Phosphoserine is present on residues Ser787, Ser797, and Ser823. One copy of the HEAT 5 repeat lies at 974–1011 (QQFNILMRFIVDQTQTPNLKVKVAILKYIESLARQMDP). Disordered regions lie at residues 1080–1120 (HLKN…CSHG) and 1136–1156 (AKHP…SHKA). The segment covering 1082-1097 (KNSSNTSVGSPSNTIG) has biased composition (polar residues). Residue Ser1091 is modified to Phosphoserine. Thr1095 and Thr1099 each carry phosphothreonine. The segment covering 1106 to 1115 (SRTSPLTSPT) has biased composition (low complexity). A Phosphoserine modification is found at Ser1113. Phosphoserine occurs at positions 1196 and 1223. The segment at 1215 to 1238 (VSRDGGAASPATEGRGGSEVEGGR) is disordered. The interval 1254–1538 (RAFPGPRARD…SSSSDVSTHS (285 aa)) is interaction with CLIP2. The segment at 1254-1538 (RAFPGPRARD…SSSSDVSTHS (285 aa)) is interaction with PHLDB2 and RSN. The segment at 1256–1538 (FPGPRARDYN…SSSSDVSTHS (283 aa)) is localization to kinetochores. A coiled-coil region spans residues 1299–1330 (DHSDLVADLLKELSNHNERVEERKGALLELLK). HEAT repeat units follow at residues 1342-1379 (EHFK…NQPA) and 1460-1497 (QLLV…VIGE).

The protein belongs to the CLASP family. As to quaternary structure, interacts with CLIP2, ERC1, MAPRE1, MAPRE3, microtubules, PHLDB2 and RSN. The interaction with ERC1 may be mediated by PHLDB2. Interacts with GCC2; recruits CLASP1 to Golgi membranes. Interacts with MACF1. Interacts with mtcl2 and MTCL1.

The protein resides in the cytoplasm. It is found in the cytoskeleton. The protein localises to the microtubule organizing center. Its subcellular location is the centrosome. It localises to the chromosome. The protein resides in the centromere. It is found in the kinetochore. The protein localises to the spindle. Its subcellular location is the golgi apparatus. It localises to the trans-Golgi network. Its function is as follows. Microtubule plus-end tracking protein that promotes the stabilization of dynamic microtubules. Involved in the nucleation of noncentrosomal microtubules originating from the trans-Golgi network (TGN). Required for the polarization of the cytoplasmic microtubule arrays in migrating cells towards the leading edge of the cell. May act at the cell cortex to enhance the frequency of rescue of depolymerizing microtubules by attaching their plus-ends to cortical platforms composed of ERC1 and PHLDB2. This cortical microtubule stabilizing activity is regulated at least in part by phosphatidylinositol 3-kinase signaling. Also performs a similar stabilizing function at the kinetochore which is essential for the bipolar alignment of chromosomes on the mitotic spindle. This chain is CLIP-associating protein 1 (CLASP1), found in Homo sapiens (Human).